We begin with the raw amino-acid sequence, 158 residues long: ATP synthase subunit delta, mitochondrial (158 aa).

The transit peptide at 1 to 22 directs the protein to the mitochondrion; it reads MFRLTSARALFRVANVAARRTY.

The protein belongs to the ATPase epsilon chain family. As to quaternary structure, F-type ATPases have 2 components, CF(1) - the catalytic core - and CF(0) - the membrane proton channel. CF(1) has five subunits: alpha(3), beta(3), gamma(1), delta(1), epsilon(1). CF(0) has three main subunits: a, b and c.

It localises to the mitochondrion. The protein localises to the mitochondrion inner membrane. In terms of biological role, mitochondrial membrane ATP synthase (F(1)F(0) ATP synthase or Complex V) produces ATP from ADP in the presence of a proton gradient across the membrane which is generated by electron transport complexes of the respiratory chain. F-type ATPases consist of two structural domains, F(1) - containing the extramembraneous catalytic core, and F(0) - containing the membrane proton channel, linked together by a central stalk and a peripheral stalk. During catalysis, ATP turnover in the catalytic domain of F(1) is coupled via a rotary mechanism of the central stalk subunits to proton translocation. Part of the complex F(1) domain and of the central stalk which is part of the complex rotary element. Rotation of the central stalk against the surrounding alpha(3)beta(3) subunits leads to hydrolysis of ATP in three separate catalytic sites on the beta subunits. In Eremothecium gossypii (strain ATCC 10895 / CBS 109.51 / FGSC 9923 / NRRL Y-1056) (Yeast), this protein is ATP synthase subunit delta, mitochondrial (ATP16).